Reading from the N-terminus, the 300-residue chain is Dipeptide transport system permease protein DppC (300 aa).

Topologically, residues 1 to 31 are cytoplasmic; that stretch reads MSQVTENKVISAPVPMTPLQEFWHYFKRNKG. The chain crosses the membrane as a helical span at residues 32–52; that stretch reads AVVGLVYVVIVLFIAIFANWI. Residues 53–101 lie on the Periplasmic side of the membrane; sequence APYNPAEQFRDALLAPPAWQEGGSMAHLLGTDDVGRDVLSRLMYGARLS. In terms of domain architecture, ABC transmembrane type-1 spans 98-287; the sequence is ARLSLLVGCL…LTVLAFNLMG (190 aa). The helical transmembrane segment at 102–122 threads the bilayer; it reads LLVGCLVVVLSLIMGVILGLI. Residues 123–136 lie on the Cytoplasmic side of the membrane; sequence AGYFGGLVDNIIMR. A helical membrane pass occupies residues 137–157; it reads VVDIMLALPSLLLALVLVAIF. Topologically, residues 158-206 are periplasmic; sequence GPSIGNAALALTFVALPHYVRLTRAAVLVEVNRDYVTASRVAGAGAMRQ. The chain crosses the membrane as a helical span at residues 207–227; it reads MFINIFPNCLAPLIVQASLGF. At 228 to 230 the chain is on the cytoplasmic side; it reads SNA. A helical transmembrane segment spans residues 231 to 251; the sequence is ILDMAALGFLGMGAQPPTPEW. The Periplasmic segment spans residues 252 to 265; sequence GTMLSDVLQFAQSA. Residues 266–286 form a helical membrane-spanning segment; it reads WWVVTFPGLAILLTVLAFNLM. Residues 287–300 are Cytoplasmic-facing; it reads GDGLRDALDPKLKQ.

This sequence belongs to the binding-protein-dependent transport system permease family. OppBC subfamily. The complex is composed of two ATP-binding proteins (DppD and DppF), two transmembrane proteins (DppB and DppC) and a solute-binding protein (DppA).

The protein localises to the cell inner membrane. Functionally, part of the ABC transporter DppABCDF involved in dipeptide transport. Responsible for the translocation of the substrate across the membrane. The protein is Dipeptide transport system permease protein DppC (dppC) of Escherichia coli O157:H7.